The following is a 282-amino-acid chain: Ribosome biogenesis GTPase A (282 aa).

The 165-residue stretch at 14 to 178 (RREVTEKLKL…LLDTPGILWP (165 aa)) folds into the CP-type G domain. Residues 58-61 (NKAD), 86-87 (NS), 130-135 (NVGKST), and Gly-174 contribute to the GTP site.

The protein belongs to the TRAFAC class YlqF/YawG GTPase family. MTG1 subfamily. As to quaternary structure, interacts with ctc. Interacts with the immature 50S ribosome subunit. 2 molecules of rbgA bind to one 50S subunit.

It is found in the cytoplasm. Functionally, essential protein that is required for a late step of 50S ribosomal subunit assembly. Has GTPase activity that is stimulated by interaction with the immature 50S ribosome subunit. Binds to the 23S rRNA. Required for the association of ribosomal proteins rplP and rpmA with the large subunit. In Bacillus spizizenii (strain ATCC 23059 / NRRL B-14472 / W23) (Bacillus subtilis subsp. spizizenii), this protein is Ribosome biogenesis GTPase A (rbgA).